Reading from the N-terminus, the 582-residue chain is Trans-ocimene synthase, chloroplastic (582 aa).

A chloroplast-targeting transit peptide spans 1–35; the sequence is MSLIIQSLPHWSRIPPRPPQLSQFQNSSRPKPLIQ. Residues R296, D333, D337, R474, and D477 each coordinate (2E)-geranyl diphosphate. Mg(2+)-binding residues include D333 and D337. The short motif at 333–337 is the DDXXD motif element; that stretch reads DDIYD. The Mg(2+) site is built by D477, T481, and E485.

The protein belongs to the terpene synthase family. Tpsb subfamily. In terms of assembly, monomer. The cofactor is Mg(2+). Mn(2+) is required as a cofactor. As to expression, expressed in male and female leaves. Barely detectable in fruits and shoots.

It localises to the plastid. It is found in the chloroplast. It carries out the reaction (2E)-geranyl diphosphate = (E)-beta-ocimene + diphosphate. It functions in the pathway secondary metabolite biosynthesis; terpenoid biosynthesis. Functionally, monoterpene synthase (TPS) involved in the biosynthesis of monoterpene natural products used by traditional Chinese medicine to treat headache, inflammation and intoxication. Catalyzes the conversion of (2E)-geranyl diphosphate (GPP) into (E)-beta-ocimene. The sequence is that of Trans-ocimene synthase, chloroplastic from Litsea cubeba (Aromatic litsea).